The sequence spans 347 residues: uncharacterized protein (347 aa).

It is found in the cytoplasm. It localises to the nucleus. This is an uncharacterized protein from Schizosaccharomyces pombe (strain 972 / ATCC 24843) (Fission yeast).